A 447-amino-acid chain; its full sequence is Chromosomal replication initiator protein DnaA (447 aa).

Residues 1–70 are domain I, interacts with DnaA modulators; it reads MQDFWSKAMD…EEILSEQLGE (70 aa). The tract at residues 70–110 is domain II; sequence EPVTLLFAADPALEKPVASKTQTVTPVQSGGETGDQENFHS. Residues 87–109 form a disordered region; that stretch reads ASKTQTVTPVQSGGETGDQENFH. Residues 88 to 99 show a composition bias toward polar residues; the sequence is SKTQTVTPVQSG. The tract at residues 111–327 is domain III, AAA+ region; the sequence is GLDPRYTFDS…GALIRVSAYA (217 aa). The ATP site is built by glycine 155, glycine 157, lysine 158, and threonine 159. Residues 328-447 are domain IV, binds dsDNA; it reads SLTGKPITMA…LASLKSMLQK (120 aa).

Belongs to the DnaA family. As to quaternary structure, oligomerizes as a right-handed, spiral filament on DNA at oriC.

It localises to the cytoplasm. In terms of biological role, plays an essential role in the initiation and regulation of chromosomal replication. ATP-DnaA binds to the origin of replication (oriC) to initiate formation of the DNA replication initiation complex once per cell cycle. Binds the DnaA box (a 9 base pair repeat at the origin) and separates the double-stranded (ds)DNA. Forms a right-handed helical filament on oriC DNA; dsDNA binds to the exterior of the filament while single-stranded (ss)DNA is stabiized in the filament's interior. The ATP-DnaA-oriC complex binds and stabilizes one strand of the AT-rich DNA unwinding element (DUE), permitting loading of DNA polymerase. After initiation quickly degrades to an ADP-DnaA complex that is not apt for DNA replication. Binds acidic phospholipids. This Magnetococcus marinus (strain ATCC BAA-1437 / JCM 17883 / MC-1) protein is Chromosomal replication initiator protein DnaA.